A 243-amino-acid chain; its full sequence is Probable transcriptional regulatory protein Smal_3128 (243 aa).

This sequence belongs to the TACO1 family.

The protein localises to the cytoplasm. The polypeptide is Probable transcriptional regulatory protein Smal_3128 (Stenotrophomonas maltophilia (strain R551-3)).